The primary structure comprises 731 residues: Actin filament-associated protein 1 (731 aa).

N-acetylmethionine is present on Met1. The segment at 46–90 (VKDHAQKAETNNLPAPPQMPLPEIPQPWLPPDSGPPPLPTSSLPE) is disordered. Over residues 59-84 (PAPPQMPLPEIPQPWLPPDSGPPPLP) the composition is skewed to pro residues. The SH3-binding motif lies at 70-73 (PQPW). The SH2-binding 1 signature appears at 93–96 (YEEA). The interval 118 to 138 (GSSYESYDEEEEDGKGKKTQH) is disordered. The PH 1 domain occupies 152–248 (DAKICAFLLR…WLKVIKEAYS (97 aa)). Residues 252–318 (GPVDPECSPP…SKSEAKGTVS (67 aa)) form a disordered region. The segment covering 271-284 (AELEKKLSSERPSS) has biased composition (basic and acidic residues). A phosphoserine mark is found at Ser283 and Ser284. In terms of domain architecture, PH 2 spans 348–442 (DVPTCGYLNV…WIGILLAETG (95 aa)). Positions 452 to 457 (YDYIDV) match the SH2-binding 2 motif. The tract at residues 511 to 550 (SLKNKKPPASSNGLPVKGRAPSSQQKKVESAGGVKRTASN) is disordered. Residue Ser549 is modified to Phosphoserine. A coiled-coil region spans residues 558–649 (KNRVEADAKR…VKESLKKALA (92 aa)). An interaction with F-actin region spans residues 595–638 (DLRAAIEVNAGRKTQVALEDKLKRLEEECKQREAERVSLELELT). The segment at 657–731 (AIEPKSGTSS…AREWELKNGT (75 aa)) is disordered. A phosphoserine mark is found at Ser665, Ser666, and Ser669. Thr676 carries the phosphothreonine modification. A compositionally biased stretch (polar residues) spans 678–687 (ENSPISSCDT). Ser680 and Ser688 each carry phosphoserine. Basic and acidic residues predominate over residues 721–731 (KAREWELKNGT).

Monomer and homomultimer. Interacts via its C-terminus with F-actin; probably involving AFAP1 multimers. Interacts with activated SRC SH3-SH2 domains. Interacts via its PH 1 domain with PRKCA, PRKCB and PRKCI. In terms of processing, phosphorylated on tyrosine residues. In terms of tissue distribution, widely expressed with highest levels in brain.

It is found in the cytoplasm. The protein resides in the cytoskeleton. It localises to the stress fiber. Its function is as follows. Can cross-link actin filaments into both network and bundle structures. May modulate changes in actin filament integrity and induce lamellipodia formation. May function as an adapter molecule that links other proteins, such as SRC and PKC to the actin cytoskeleton. This Rattus norvegicus (Rat) protein is Actin filament-associated protein 1 (Afap1).